Here is a 149-residue protein sequence, read N- to C-terminus: MKYQQLENLECGWKWQYLINKWKDGETITKYIDSSEADHAVSELRKLEHEPTKVLEWIDLHMAEELDKKLKQAIRAKRKRHFNAEQIHTKKKSIDLDYRVWEKLSTRANELGCTLSDAIEYLLSEASRSEKASAAVSTLKEDLSKLLSD.

This sequence belongs to the MatP family. Homodimer.

Its subcellular location is the cytoplasm. Its function is as follows. Required for spatial organization of the terminus region of the chromosome (Ter macrodomain) during the cell cycle. Prevents early segregation of duplicated Ter macrodomains during cell division. Binds specifically to matS, which is a 13 bp signature motif repeated within the Ter macrodomain. The chain is Macrodomain Ter protein from Vibrio vulnificus (strain YJ016).